Reading from the N-terminus, the 650-residue chain is Acetyl-coenzyme A synthetase (650 aa).

CoA contacts are provided by residues 191–194 (RGGR), Thr311, and Asn335. ATP contacts are provided by residues 387–389 (GEP), 411–416 (DTWWQT), Asp500, and Arg515. Ser523 serves as a coordination point for CoA. Position 526 (Arg526) interacts with ATP. Positions 537, 539, and 542 each coordinate Mg(2+). Arg584 provides a ligand contact to CoA. The residue at position 609 (Lys609) is an N6-acetyllysine.

Belongs to the ATP-dependent AMP-binding enzyme family. Mg(2+) is required as a cofactor. Post-translationally, acetylated. Deacetylation by the SIR2-homolog deacetylase activates the enzyme.

It carries out the reaction acetate + ATP + CoA = acetyl-CoA + AMP + diphosphate. Its function is as follows. Catalyzes the conversion of acetate into acetyl-CoA (AcCoA), an essential intermediate at the junction of anabolic and catabolic pathways. AcsA undergoes a two-step reaction. In the first half reaction, AcsA combines acetate with ATP to form acetyl-adenylate (AcAMP) intermediate. In the second half reaction, it can then transfer the acetyl group from AcAMP to the sulfhydryl group of CoA, forming the product AcCoA. The protein is Acetyl-coenzyme A synthetase of Shewanella sp. (strain MR-7).